The following is a 255-amino-acid chain: Ribosomal RNA small subunit methyltransferase A (255 aa).

S-adenosyl-L-methionine is bound by residues asparagine 12, leucine 14, glycine 39, glutamate 60, aspartate 84, and asparagine 106.

It belongs to the class I-like SAM-binding methyltransferase superfamily. rRNA adenine N(6)-methyltransferase family. RsmA subfamily.

It is found in the cytoplasm. It catalyses the reaction adenosine(1518)/adenosine(1519) in 16S rRNA + 4 S-adenosyl-L-methionine = N(6)-dimethyladenosine(1518)/N(6)-dimethyladenosine(1519) in 16S rRNA + 4 S-adenosyl-L-homocysteine + 4 H(+). Specifically dimethylates two adjacent adenosines (A1518 and A1519) in the loop of a conserved hairpin near the 3'-end of 16S rRNA in the 30S particle. May play a critical role in biogenesis of 30S subunits. This is Ribosomal RNA small subunit methyltransferase A from Janthinobacterium sp. (strain Marseille) (Minibacterium massiliensis).